A 287-amino-acid chain; its full sequence is Bifunctional protein FolD (287 aa).

Residues Gly-160 to Ser-162, Ser-189, and Thr-230 each bind NADP(+).

The protein belongs to the tetrahydrofolate dehydrogenase/cyclohydrolase family. As to quaternary structure, homodimer.

It carries out the reaction (6R)-5,10-methylene-5,6,7,8-tetrahydrofolate + NADP(+) = (6R)-5,10-methenyltetrahydrofolate + NADPH. The enzyme catalyses (6R)-5,10-methenyltetrahydrofolate + H2O = (6R)-10-formyltetrahydrofolate + H(+). It functions in the pathway one-carbon metabolism; tetrahydrofolate interconversion. Catalyzes the oxidation of 5,10-methylenetetrahydrofolate to 5,10-methenyltetrahydrofolate and then the hydrolysis of 5,10-methenyltetrahydrofolate to 10-formyltetrahydrofolate. The chain is Bifunctional protein FolD from Chlamydia abortus (strain DSM 27085 / S26/3) (Chlamydophila abortus).